Reading from the N-terminus, the 425-residue chain is Glutamate-1-semialdehyde 2,1-aminomutase (425 aa).

An N6-(pyridoxal phosphate)lysine modification is found at lysine 265.

It belongs to the class-III pyridoxal-phosphate-dependent aminotransferase family. HemL subfamily. Homodimer. Pyridoxal 5'-phosphate serves as cofactor.

Its subcellular location is the cytoplasm. It carries out the reaction (S)-4-amino-5-oxopentanoate = 5-aminolevulinate. It functions in the pathway porphyrin-containing compound metabolism; protoporphyrin-IX biosynthesis; 5-aminolevulinate from L-glutamyl-tRNA(Glu): step 2/2. The chain is Glutamate-1-semialdehyde 2,1-aminomutase from Clostridium perfringens (strain ATCC 13124 / DSM 756 / JCM 1290 / NCIMB 6125 / NCTC 8237 / Type A).